A 274-amino-acid chain; its full sequence is Dehydration-responsive element-binding protein 2A (274 aa).

2 stretches are compositionally biased toward basic and acidic residues: residues 1–10 and 35–50; these read MERGEGRRGD and KWWK…ENSS. The segment at 1 to 75 is disordered; that stretch reads MERGEGRRGD…KGGPENSNCA (75 aa). The AP2/ERF DNA-binding region spans 75–132; the sequence is AYRGVRQRTWGKWVAEIREPNRGRRLWLGSFPTALEAAHAYDEAARAMYGPTARVNFA.

Belongs to the AP2/ERF transcription factor family. ERF subfamily.

It is found in the nucleus. Transcriptional activator that binds specifically to the DNA sequence 5'-[AG]CCGAC-3'. Binding to the C-repeat/DRE element mediates high salinity- and dehydration-inducible transcription. This Oryza sativa subsp. indica (Rice) protein is Dehydration-responsive element-binding protein 2A (DREB2A).